The chain runs to 300 residues: Phosphatidylserine decarboxylase proenzyme (300 aa).

Residues Asp-113, His-169, and Ser-256 each act as charge relay system; for autoendoproteolytic cleavage activity in the active site. The active-site Schiff-base intermediate with substrate; via pyruvic acid; for decarboxylase activity is the Ser-256. The residue at position 256 (Ser-256) is a Pyruvic acid (Ser); by autocatalysis.

This sequence belongs to the phosphatidylserine decarboxylase family. PSD-B subfamily. Prokaryotic type II sub-subfamily. In terms of assembly, heterodimer of a large membrane-associated beta subunit and a small pyruvoyl-containing alpha subunit. Requires pyruvate as cofactor. Is synthesized initially as an inactive proenzyme. Formation of the active enzyme involves a self-maturation process in which the active site pyruvoyl group is generated from an internal serine residue via an autocatalytic post-translational modification. Two non-identical subunits are generated from the proenzyme in this reaction, and the pyruvate is formed at the N-terminus of the alpha chain, which is derived from the carboxyl end of the proenzyme. The autoendoproteolytic cleavage occurs by a canonical serine protease mechanism, in which the side chain hydroxyl group of the serine supplies its oxygen atom to form the C-terminus of the beta chain, while the remainder of the serine residue undergoes an oxidative deamination to produce ammonia and the pyruvoyl prosthetic group on the alpha chain. During this reaction, the Ser that is part of the protease active site of the proenzyme becomes the pyruvoyl prosthetic group, which constitutes an essential element of the active site of the mature decarboxylase.

The protein localises to the cell membrane. It catalyses the reaction a 1,2-diacyl-sn-glycero-3-phospho-L-serine + H(+) = a 1,2-diacyl-sn-glycero-3-phosphoethanolamine + CO2. The protein operates within phospholipid metabolism; phosphatidylethanolamine biosynthesis; phosphatidylethanolamine from CDP-diacylglycerol: step 2/2. Its function is as follows. Catalyzes the formation of phosphatidylethanolamine (PtdEtn) from phosphatidylserine (PtdSer). In Ruminiclostridium cellulolyticum (strain ATCC 35319 / DSM 5812 / JCM 6584 / H10) (Clostridium cellulolyticum), this protein is Phosphatidylserine decarboxylase proenzyme.